The chain runs to 289 residues: Urease accessory protein UreD (289 aa).

It belongs to the UreD family. In terms of assembly, ureD, UreF and UreG form a complex that acts as a GTP-hydrolysis-dependent molecular chaperone, activating the urease apoprotein by helping to assemble the nickel containing metallocenter of UreC. The UreE protein probably delivers the nickel.

It localises to the cytoplasm. Its function is as follows. Required for maturation of urease via the functional incorporation of the urease nickel metallocenter. In Magnetococcus marinus (strain ATCC BAA-1437 / JCM 17883 / MC-1), this protein is Urease accessory protein UreD.